The sequence spans 464 residues: Argininosuccinate lyase (464 aa).

It belongs to the lyase 1 family. Argininosuccinate lyase subfamily.

Its subcellular location is the cytoplasm. It carries out the reaction 2-(N(omega)-L-arginino)succinate = fumarate + L-arginine. It functions in the pathway amino-acid biosynthesis; L-arginine biosynthesis; L-arginine from L-ornithine and carbamoyl phosphate: step 3/3. The chain is Argininosuccinate lyase from Janthinobacterium sp. (strain Marseille) (Minibacterium massiliensis).